The primary structure comprises 479 residues: Glutamyl-tRNA(Gln) amidotransferase subunit A (479 aa).

Residues lysine 71 and serine 146 each act as charge relay system in the active site. Residue serine 170 is the Acyl-ester intermediate of the active site.

It belongs to the amidase family. GatA subfamily. In terms of assembly, heterotrimer of A, B and C subunits.

It catalyses the reaction L-glutamyl-tRNA(Gln) + L-glutamine + ATP + H2O = L-glutaminyl-tRNA(Gln) + L-glutamate + ADP + phosphate + H(+). Allows the formation of correctly charged Gln-tRNA(Gln) through the transamidation of misacylated Glu-tRNA(Gln) in organisms which lack glutaminyl-tRNA synthetase. The reaction takes place in the presence of glutamine and ATP through an activated gamma-phospho-Glu-tRNA(Gln). In Lactobacillus acidophilus (strain ATCC 700396 / NCK56 / N2 / NCFM), this protein is Glutamyl-tRNA(Gln) amidotransferase subunit A.